Consider the following 94-residue polypeptide: HssA/B-like protein 51 (94 aa).

A disordered region spans residues 1 to 25 (MTLFSSISSISNPMTNSKSRISSFG).

It belongs to the hssA/B family.

The sequence is that of HssA/B-like protein 51 (hssl51) from Dictyostelium discoideum (Social amoeba).